Reading from the N-terminus, the 842-residue chain is Serine/threonine-protein kinase CLA4 (842 aa).

Residues Asp-12 to Cys-34 form a disordered region. Residues Ser-29 and Ser-46 each carry the phosphoserine modification. The 119-residue stretch at Ser-61 to Pro-179 folds into the PH domain. The CRIB domain maps to Val-184 to Gly-197. The segment covering Gly-247 to Asp-274 has biased composition (polar residues). A disordered region spans residues Gly-247–Met-524. Residues Asn-279–Ser-296 are compositionally biased toward low complexity. Residues Gln-297–Lys-307 show a composition bias toward polar residues. Positions Ser-308–Pro-319 are enriched in low complexity. A compositionally biased stretch (polar residues) spans Lys-323 to Tyr-343. Ser-351 and Ser-367 each carry phosphoserine. The segment covering Gln-372 to Gln-387 has biased composition (low complexity). The span at Ser-396–Pro-408 shows a compositional bias: pro residues. A compositionally biased stretch (low complexity) spans Pro-418 to Gln-435. Position 425 is a phosphoserine (Ser-425). 2 stretches are compositionally biased toward polar residues: residues Pro-470–Val-481 and Asn-488–Arg-497. The 280-residue stretch at Phe-546–Phe-825 folds into the Protein kinase domain. Residues Ala-552–Val-560 and Lys-594 contribute to the ATP site. Catalysis depends on Asp-693, which acts as the Proton acceptor.

This sequence belongs to the protein kinase superfamily. STE Ser/Thr protein kinase family. STE20 subfamily. As to quaternary structure, interacts with CDC42.

It catalyses the reaction L-seryl-[protein] + ATP = O-phospho-L-seryl-[protein] + ADP + H(+). The catalysed reaction is L-threonyl-[protein] + ATP = O-phospho-L-threonyl-[protein] + ADP + H(+). Its function is as follows. Involved in budding and cytokinesis. The chain is Serine/threonine-protein kinase CLA4 (CLA4) from Saccharomyces cerevisiae (strain ATCC 204508 / S288c) (Baker's yeast).